A 269-amino-acid chain; its full sequence is Cytochrome c oxidase subunit 3 (269 aa).

The next 7 membrane-spanning stretches (helical) occupy residues 13–33 (PFHLVSPSLWPLYTSISLLVL), 46–66 (NGHYSVYLGLILVISSMSFWF), 90–110 (GVILFIVSEALFFMAIFWAFF), 138–160 (PLLNTVILLSSGATVTYAHHSII), 167–187 (ALYGSVATVLLAIVFTGFQGV), 207–227 (FGTGFHGLHVIIGTIFLLVAL), and 245–265 (AGILYWHFVDVVWLFLYISIY).

Belongs to the cytochrome c oxidase subunit 3 family. In terms of assembly, component of the cytochrome c oxidase (complex IV, CIV), a multisubunit enzyme composed of a catalytic core of 3 subunits and several supernumerary subunits. The complex exists as a monomer or a dimer and forms supercomplexes (SCs) in the inner mitochondrial membrane with ubiquinol-cytochrome c oxidoreductase (cytochrome b-c1 complex, complex III, CIII).

It localises to the mitochondrion inner membrane. The catalysed reaction is 4 Fe(II)-[cytochrome c] + O2 + 8 H(+)(in) = 4 Fe(III)-[cytochrome c] + 2 H2O + 4 H(+)(out). Component of the cytochrome c oxidase, the last enzyme in the mitochondrial electron transport chain which drives oxidative phosphorylation. The respiratory chain contains 3 multisubunit complexes succinate dehydrogenase (complex II, CII), ubiquinol-cytochrome c oxidoreductase (cytochrome b-c1 complex, complex III, CIII) and cytochrome c oxidase (complex IV, CIV), that cooperate to transfer electrons derived from NADH and succinate to molecular oxygen, creating an electrochemical gradient over the inner membrane that drives transmembrane transport and the ATP synthase. Cytochrome c oxidase is the component of the respiratory chain that catalyzes the reduction of oxygen to water. Electrons originating from reduced cytochrome c in the intermembrane space (IMS) are transferred via the dinuclear copper A center (CU(A)) of subunit 2 and heme A of subunit 1 to the active site in subunit 1, a binuclear center (BNC) formed by heme A3 and copper B (CU(B)). The BNC reduces molecular oxygen to 2 water molecules using 4 electrons from cytochrome c in the IMS and 4 protons from the mitochondrial matrix. The sequence is that of Cytochrome c oxidase subunit 3 (COX3) from Pyricularia grisea (Crabgrass-specific blast fungus).